The primary structure comprises 413 residues: Multidrug resistance protein MdtA (413 aa).

Positions 1-20 are cleaved as a signal peptide; sequence MKGSNTFRWAIAIGVVVAAA. Disordered regions lie at residues 31–57 and 392–413; these read SPTA…RDGP and PQTT…GARA. Residues 397 to 413 show a composition bias toward basic and acidic residues; the sequence is ADEKSPSRHEGQKGARA.

Belongs to the membrane fusion protein (MFP) (TC 8.A.1) family. Part of a tripartite efflux system composed of MdtA, MdtB and MdtC.

It localises to the cell inner membrane. The chain is Multidrug resistance protein MdtA from Salmonella heidelberg (strain SL476).